The primary structure comprises 404 residues: Probable tRNA sulfurtransferase (404 aa).

Residues 60–165 enclose the THUMP domain; that stretch reads RSVIEALKPV…DEAAYLSHED (106 aa). Residues 183–184, 208–209, Arg-265, Gly-287, and Gln-296 each bind ATP; these read ML and HF.

Belongs to the ThiI family.

It localises to the cytoplasm. It catalyses the reaction [ThiI sulfur-carrier protein]-S-sulfanyl-L-cysteine + a uridine in tRNA + 2 reduced [2Fe-2S]-[ferredoxin] + ATP + H(+) = [ThiI sulfur-carrier protein]-L-cysteine + a 4-thiouridine in tRNA + 2 oxidized [2Fe-2S]-[ferredoxin] + AMP + diphosphate. The enzyme catalyses [ThiS sulfur-carrier protein]-C-terminal Gly-Gly-AMP + S-sulfanyl-L-cysteinyl-[cysteine desulfurase] + AH2 = [ThiS sulfur-carrier protein]-C-terminal-Gly-aminoethanethioate + L-cysteinyl-[cysteine desulfurase] + A + AMP + 2 H(+). It participates in cofactor biosynthesis; thiamine diphosphate biosynthesis. Its function is as follows. Catalyzes the ATP-dependent transfer of a sulfur to tRNA to produce 4-thiouridine in position 8 of tRNAs, which functions as a near-UV photosensor. Also catalyzes the transfer of sulfur to the sulfur carrier protein ThiS, forming ThiS-thiocarboxylate. This is a step in the synthesis of thiazole, in the thiamine biosynthesis pathway. The sulfur is donated as persulfide by IscS. This chain is Probable tRNA sulfurtransferase, found in Streptococcus equi subsp. equi (strain 4047).